The primary structure comprises 100 residues: NADH-quinone oxidoreductase subunit K (100 aa).

Helical transmembrane passes span 1–21 (MIGL…GLAG), 28–48 (ILLL…GFVA), and 64–84 (FIIS…ILWF).

This sequence belongs to the complex I subunit 4L family. NDH-1 is composed of 14 different subunits. Subunits NuoA, H, J, K, L, M, N constitute the membrane sector of the complex.

Its subcellular location is the cell inner membrane. It catalyses the reaction a quinone + NADH + 5 H(+)(in) = a quinol + NAD(+) + 4 H(+)(out). Its function is as follows. NDH-1 shuttles electrons from NADH, via FMN and iron-sulfur (Fe-S) centers, to quinones in the respiratory chain. The immediate electron acceptor for the enzyme in this species is believed to be ubiquinone. Couples the redox reaction to proton translocation (for every two electrons transferred, four hydrogen ions are translocated across the cytoplasmic membrane), and thus conserves the redox energy in a proton gradient. The sequence is that of NADH-quinone oxidoreductase subunit K from Helicobacter pylori (strain ATCC 700392 / 26695) (Campylobacter pylori).